Reading from the N-terminus, the 512-residue chain is Bifunctional purine biosynthesis protein PurH (512 aa).

An MGS-like domain is found at 1–150 (MIGEERVVRA…KNFPAVLVLV (150 aa)).

Belongs to the PurH family.

The catalysed reaction is (6R)-10-formyltetrahydrofolate + 5-amino-1-(5-phospho-beta-D-ribosyl)imidazole-4-carboxamide = 5-formamido-1-(5-phospho-D-ribosyl)imidazole-4-carboxamide + (6S)-5,6,7,8-tetrahydrofolate. It catalyses the reaction IMP + H2O = 5-formamido-1-(5-phospho-D-ribosyl)imidazole-4-carboxamide. It functions in the pathway purine metabolism; IMP biosynthesis via de novo pathway; 5-formamido-1-(5-phospho-D-ribosyl)imidazole-4-carboxamide from 5-amino-1-(5-phospho-D-ribosyl)imidazole-4-carboxamide (10-formyl THF route): step 1/1. The protein operates within purine metabolism; IMP biosynthesis via de novo pathway; IMP from 5-formamido-1-(5-phospho-D-ribosyl)imidazole-4-carboxamide: step 1/1. The polypeptide is Bifunctional purine biosynthesis protein PurH (Chloroflexus aurantiacus (strain ATCC 29366 / DSM 635 / J-10-fl)).